We begin with the raw amino-acid sequence, 146 residues long: 3-dehydroquinate dehydratase (146 aa).

Residue Tyr-22 is the Proton acceptor of the active site. Positions 73, 79, and 86 each coordinate substrate. His-99 serves as the catalytic Proton donor. Substrate contacts are provided by residues 100–101 and Arg-110; that span reads VS.

Belongs to the type-II 3-dehydroquinase family. In terms of assembly, homododecamer.

It catalyses the reaction 3-dehydroquinate = 3-dehydroshikimate + H2O. The protein operates within metabolic intermediate biosynthesis; chorismate biosynthesis; chorismate from D-erythrose 4-phosphate and phosphoenolpyruvate: step 3/7. Its function is as follows. Catalyzes a trans-dehydration via an enolate intermediate. The sequence is that of 3-dehydroquinate dehydratase from Kineococcus radiotolerans (strain ATCC BAA-149 / DSM 14245 / SRS30216).